We begin with the raw amino-acid sequence, 203 residues long: Large ribosomal subunit protein bL25 (203 aa).

Belongs to the bacterial ribosomal protein bL25 family. CTC subfamily. In terms of assembly, part of the 50S ribosomal subunit; part of the 5S rRNA/L5/L18/L25 subcomplex. Contacts the 5S rRNA. Binds to the 5S rRNA independently of L5 and L18.

Its function is as follows. This is one of the proteins that binds to the 5S RNA in the ribosome where it forms part of the central protuberance. This chain is Large ribosomal subunit protein bL25, found in Chlorobium phaeovibrioides (strain DSM 265 / 1930) (Prosthecochloris vibrioformis (strain DSM 265)).